Here is a 944-residue protein sequence, read N- to C-terminus: Calcium-transporting ATPase type 2C member 2 (944 aa).

Topologically, residues 1–104 are cytoplasmic; that stretch reads MGRRLKFLQK…DNAEPVWKKY (104 aa). The interaction with ORAI1 stretch occupies residues 69–93; it reads VDLDSGLSEFAVAQRRLVHGWNEFV. Residues 105-125 traverse the membrane as a helical segment; sequence LDQFRNPLILLLLGSSVVSVL. At 126-127 the chain is on the extracellular side; that stretch reads TK. Residues 128–148 form a helical membrane-spanning segment; that stretch reads EYEDAVSIALAVLIVVTVGFI. The Cytoplasmic portion of the chain corresponds to 149-229; sequence QEYRSEKSLE…EVEPCGKTDS (81 aa). Residues 230 to 250 traverse the membrane as a helical segment; the sequence is PLADGGDLSTLSNVVFMGTLV. The Extracellular portion of the chain corresponds to 251-291; it reads QCGKGQGVVIGTGEQSQFGEVFKMMRAEETPKTPLQKSMDK. Thr-262 bears the Phosphothreonine mark. Ser-266 is modified (phosphoserine). Residues 292–312 form a helical membrane-spanning segment; it reads LGKQLTIFSFGIIGLLMLVGW. The Cytoplasmic portion of the chain corresponds to 313-329; that stretch reads VQGKPFLSMFTVGVSLA. Positions 330, 331, 333, and 335 each coordinate Ca(2+). Residues 330–350 form a helical membrane-spanning segment; it reads VAAIPEGLPIVVMVTLVLGVL. Topologically, residues 351–748 are extracellular; the sequence is RMAKKRVIVK…IAALSLITLS (398 aa). The active-site 4-aspartylphosphate intermediate is the Asp-377. Positions 672 and 676 each coordinate Mg(2+). A helical transmembrane segment spans residues 749 to 769; it reads TVCNLPSPLNAMQILWVNIIM. Residues Asn-766 and Asp-770 each contribute to the Ca(2+) site. The Cytoplasmic segment spans residues 770–802; that stretch reads DGPPAQSLGVEPVDRDALRRPPRSVGDTILNRA. The chain crosses the membrane as a helical span at residues 803-823; it reads LILRVLMSAAVIIGGTLFIFW. At 824–835 the chain is on the extracellular side; it reads REIPANGTSTPR. A helical membrane pass occupies residues 836–853; that stretch reads TTTMAFTCFVFFDLFNAL. At 854 to 872 the chain is on the cytoplasmic side; it reads SCRSQTKLIFEIGFFRNRM. The helical transmembrane segment at 873–893 threads the bilayer; the sequence is FLYSVLGSLLGQLAVIYAPPL. The Extracellular segment spans residues 894–903; sequence QKVFQTENLS. Residues 904–924 traverse the membrane as a helical segment; sequence ALDLLLLTGLASSVFILSELL. The Cytoplasmic segment spans residues 925–944; that stretch reads KLWEKFLSRARPTQMLPEAV.

Belongs to the cation transport ATPase (P-type) (TC 3.A.3) family. Type IIA subfamily. As to quaternary structure, interacts (via N-terminus) with ORAI1 (via N- and C-termini); this interaction regulates Ca(2+) influx at the plasma membrane. In terms of tissue distribution, expressed in hippocampal neurons (at protein level). Expressed in lactating mammary epithelium (at protein level).

Its subcellular location is the golgi apparatus. The protein resides in the trans-Golgi network membrane. It is found in the cell membrane. The protein localises to the basolateral cell membrane. The catalysed reaction is Ca(2+)(in) + ATP + H2O = Ca(2+)(out) + ADP + phosphate + H(+). It catalyses the reaction Mn(2+)(in) + ATP + H2O = Mn(2+)(out) + ADP + phosphate + H(+). In terms of biological role, ATP-driven pump that supplies the Golgi apparatus with Ca(2+) and Mn(2+) ions, both essential cofactors for processing and trafficking of newly synthesized proteins in the secretory pathway. Within a catalytic cycle, acquires Ca(2+) or Mn(2+) ions on the cytoplasmic side of the membrane and delivers them to the lumenal side. The transfer of ions across the membrane is coupled to ATP hydrolysis and is associated with a transient phosphorylation that shifts the pump conformation from inward-facing to outward-facing state. Induces Ca(2+) influx independently of its ATP-driven pump function. At the basolateral membrane of mammary epithelial cells, interacts with Ca(2+) channel ORAI1 and mediates Ca(2+) entry independently of the Ca(2+) content of endoplasmic reticulum or Golgi stores. May facilitate transepithelial transport of large quantities of Ca(2+) for milk secretion via activation of Ca(2+) influx channels at the plasma membrane and active Ca(2+) transport at the Golgi apparatus. The sequence is that of Calcium-transporting ATPase type 2C member 2 from Mus musculus (Mouse).